We begin with the raw amino-acid sequence, 906 residues long: Translation initiation factor IF-2 (906 aa).

Disordered regions lie at residues 134 to 250 and 269 to 317; these read RQRN…GSHV and HLSA…FERP. A compositionally biased stretch (basic and acidic residues) spans 136–177; sequence RNLDEQQRLAESDRVRDEEIQRKRDEEQAAKDRAEAERKAAE. Composition is skewed to low complexity over residues 178–232 and 287–305; these read EAAA…STPA and GRPGSSSSRRGNDNGRGSN. One can recognise a tr-type G domain in the interval 405–574; that stretch reads TRPPVVTIMG…SLQAEVLELK (170 aa). Positions 414–421 are G1; that stretch reads GHVDHGKT. 414 to 421 is a GTP binding site; that stretch reads GHVDHGKT. Positions 439–443 are G2; sequence GITQH. The tract at residues 460 to 463 is G3; that stretch reads DTPG. GTP is bound by residues 460-464 and 514-517; these read DTPGH and NKID. A G4 region spans residues 514–517; the sequence is NKID. Residues 550-552 form a G5 region; it reads SAK.

This sequence belongs to the TRAFAC class translation factor GTPase superfamily. Classic translation factor GTPase family. IF-2 subfamily.

Its subcellular location is the cytoplasm. Its function is as follows. One of the essential components for the initiation of protein synthesis. Protects formylmethionyl-tRNA from spontaneous hydrolysis and promotes its binding to the 30S ribosomal subunits. Also involved in the hydrolysis of GTP during the formation of the 70S ribosomal complex. The sequence is that of Translation initiation factor IF-2 from Xanthomonas oryzae pv. oryzae (strain MAFF 311018).